A 306-amino-acid polypeptide reads, in one-letter code: MQNEHILKGVKSVERRLTFKDVKAIVKLGLVQGNLIPAFAGAFIAIMLSGRSFLSSIPELLTMLFGTTLIMAGSCALNNFYDQDIDSIMPSKQNRPSVTGKVSTASILQLSLVLMIVGEMLLFTINIETGIIGFLGIFGYVVLYSVWSKRHLVSNTIIGSFPGAIPPLVGYAAIEPSLSSTAWMLFVIMFIWQPAHFYALAIKRSEEYALAGIPMLPSVKGFKRTRLSMLFWVMLLLPTPFFMQELGTVFMVLASVLNLGWLLLAISGFRSNVKENKWAMTMFVYSLNYLMIFFVMIVVVTLIQTI.

9 helical membrane-spanning segments follow: residues 28-48 (LGLVQGNLIPAFAGAFIAIML), 53-73 (FLSSIPELLTMLFGTTLIMAG), 105-125 (ASILQLSLVLMIVGEMLLFTI), 127-147 (IETGIIGFLGIFGYVVLYSVW), 156-176 (TIIGSFPGAIPPLVGYAAIEP), 182-202 (AWMLFVIMFIWQPAHFYALAI), 227-244 (LSMLFWVMLLLPTPFFMQ), 246-266 (LGTVFMVLASVLNLGWLLLAI), and 283-303 (FVYSLNYLMIFFVMIVVVTLI).

The protein belongs to the UbiA prenyltransferase family. Protoheme IX farnesyltransferase subfamily. As to quaternary structure, interacts with CtaA.

Its subcellular location is the cell membrane. The enzyme catalyses heme b + (2E,6E)-farnesyl diphosphate + H2O = Fe(II)-heme o + diphosphate. The protein operates within porphyrin-containing compound metabolism; heme O biosynthesis; heme O from protoheme: step 1/1. In terms of biological role, converts heme B (protoheme IX) to heme O by substitution of the vinyl group on carbon 2 of heme B porphyrin ring with a hydroxyethyl farnesyl side group. This is Protoheme IX farnesyltransferase from Macrococcus caseolyticus (strain JCSC5402) (Macrococcoides caseolyticum).